Reading from the N-terminus, the 361-residue chain is Peptide chain release factor 1 (361 aa).

An N5-methylglutamine modification is found at Q235.

It belongs to the prokaryotic/mitochondrial release factor family. Methylated by PrmC. Methylation increases the termination efficiency of RF1.

It localises to the cytoplasm. Functionally, peptide chain release factor 1 directs the termination of translation in response to the peptide chain termination codons UAG and UAA. The chain is Peptide chain release factor 1 from Xanthomonas euvesicatoria pv. vesicatoria (strain 85-10) (Xanthomonas campestris pv. vesicatoria).